A 1453-amino-acid polypeptide reads, in one-letter code: Collagen alpha-1(I) chain (1453 aa).

The signal sequence occupies residues 1 to 22 (MFSFVDLRLLLLLGATALLTHG). Positions 23 to 151 (QEDIPEVSCI…PPGLGGNFAS (129 aa)) are cleaved as a propeptide — N-terminal propeptide. Residues 29–87 (VSCIHNGLRVPNGETWKPEVCLICICHNGTAVCDDVQCNEELDCPNPQRREGECCAFCP) form the VWFC domain. N-linked (GlcNAc...) asparagine glycosylation occurs at Asn-56. A disordered region spans residues 94-1210 (NSEDVGVEGP…GGRYYRADDA (1117 aa)). Composition is skewed to pro residues over residues 109 to 118 (PQGPRGPVGP) and 128 to 143 (PGLPGPPGPPGPPGPP). Residues 152–167 (QMSYGYDEKSAGVSVP) form a nonhelical region (N-terminal) region. Lys-160 carries the allysine modification. Ser-161 is modified (phosphoserine). The tract at residues 168-1181 (GPMGPSGPRG…PGPPGPPGPP (1014 aa)) is triple-helical region. A 4-hydroxyproline mark is found at Pro-179, Pro-182, Pro-185, Pro-194, Pro-197, Pro-200, Pro-215, Pro-230, Pro-236, Pro-245, and Pro-251. A compositionally biased stretch (gly residues) spans 198-207 (GEPGGSGPMG). Positions 218–232 (NGDDGEAGKPGRPGE) are enriched in basic and acidic residues. At Lys-254 the chain carries 5-hydroxylysine; alternate. A glycan (O-linked (Gal...) hydroxylysine; alternate) is linked at Lys-254. At Ser-260 the chain carries Phosphoserine. Residues 268–284 (DAGPAGPKGEPGSPGEN) show a composition bias toward low complexity. Residues Pro-278, Pro-281, Pro-287, Pro-296, and Pro-302 each carry the 4-hydroxyproline modification. The segment covering 307–320 (TAGARGNDGAVGAA) has biased composition (low complexity). The span at 322 to 334 (PPGPTGPTGPPGF) shows a compositional bias: pro residues. 11 positions are modified to 4-hydroxyproline: Pro-323, Pro-332, Pro-335, Pro-362, Pro-365, Pro-377, Pro-383, Pro-392, Pro-398, Pro-401, and Pro-416. Residues 368-407 (AGAAGPAGNPGADGQPGAKGANGAPGIAGAPGFPGARGPS) are compositionally biased toward low complexity. Lys-419 is modified (5-hydroxylysine). Pro-425, Pro-428, Pro-440, Pro-449, Pro-464, Pro-470, Pro-479, and Pro-485 each carry 4-hydroxyproline. The segment covering 474 to 483 (GERGGPGSRG) has biased composition (gly residues). Lys-494 is subject to 5-hydroxylysine. A compositionally biased stretch (low complexity) spans 499-515 (ERGAPGPAGPKGSPGEA). Pro-503, Pro-512, Pro-518, Pro-524, Pro-533, Pro-536, Pro-545, Pro-554, Pro-560, Pro-572, Pro-581, Pro-590, Pro-593, Pro-611, Pro-629, Pro-635, Pro-641, Pro-647, Pro-653, Pro-659, Pro-671, Pro-680, Pro-692, Pro-704, Pro-707, Pro-713, Pro-719, and Pro-728 each carry 4-hydroxyproline. The segment covering 527–566 (KGLTGSPGSPGPDGKTGPPGPAGQDGRPGPAGPPGARGQA) has biased composition (low complexity). A compositionally biased stretch (low complexity) spans 623–650 (QGPAGSPGFQGLPGPAGPPGEAGKPGEQ). Low complexity-rich tracts occupy residues 685 to 695 (PRGNNGAPGND) and 703 to 716 (APGAPGSQGAPGLQ). The short motif at 734-736 (RGD) is the Cell attachment site element. Position 740 is a 5-hydroxylysine (Lys-740). 4-hydroxyproline occurs at positions 746, 761, and 767. Position 776 is a phosphoserine (Ser-776). A 4-hydroxyproline mark is found at Pro-788, Pro-797, Pro-806, Pro-812, Pro-830, Pro-839, and Pro-848. Over residues 800–815 (AGFAGPPGADGQPGAK) the composition is skewed to low complexity. Residues 829–841 (PPGPAGPAGPPGP) show a composition bias toward pro residues. Positions 842–872 (IGNVGAPGPKGPRGAAGPPGATGFPGAAGRV) are enriched in low complexity. Lys-851 is subject to 5-hydroxylysine. 4-hydroxyproline is present on residues Pro-860 and Pro-866. A 3-hydroxyproline modification is found at Pro-874. A 4-hydroxyproline mark is found at Pro-875, Pro-884, Pro-887, Pro-908, Pro-917, Pro-926, Pro-935, Pro-953, Pro-962, Pro-965, Pro-971, Pro-986, Pro-992, Pro-998, Pro-1007, and Pro-1013. Residues 901-910 (ETGPAGRPGE) show a composition bias toward low complexity. The span at 920–935 (AGEKGSPGADGPAGSP) shows a compositional bias: low complexity. Over residues 985-995 (PPGPMGPPGLA) the composition is skewed to pro residues. Residues 997–1012 (PPGESGREGSPGAEGS) are compositionally biased toward low complexity. A 5-hydroxylysine modification is found at Lys-1022. The segment covering 1031–1046 (AGPPGAPGAPGAPGPV) has biased composition (pro residues). Pro-1034, Pro-1037, and Pro-1040 each carry 4-hydroxyproline. Over residues 1067 to 1081 (IGPAGARGPAGPQGP) the composition is skewed to low complexity. A Cell attachment site motif is present at residues 1082-1084 (RGD). A compositionally biased stretch (basic and acidic residues) spans 1082–1096 (RGDKGETGEQGDRGI). Lys-1085 carries the post-translational modification 5-hydroxylysine. At Lys-1097 the chain carries 5-hydroxylysine; alternate. Lys-1097 is a glycosylation site (O-linked (Gal...) hydroxylysine; alternate). Low complexity predominate over residues 1102–1148 (FSGLQGPPGSPGSPGEQGPSGASGPAGPRGPPGSAGSPGKDGLNGLP). 4-hydroxyproline is present on residues Pro-1109, Pro-1112, Pro-1115, Pro-1133, and Pro-1148. Pro-1153 carries the 3-hydroxyproline modification. Residue Pro-1154 is modified to 4-hydroxyproline. The segment covering 1166–1181 (AGPPGPPGPPGPPGPP) has biased composition (pro residues). The residue at position 1168 (Pro-1168) is a 3-hydroxyproline. Pro-1169 carries the 4-hydroxyproline modification. The residue at position 1171 (Pro-1171) is a 3-hydroxyproline. Pro-1172 is subject to 4-hydroxyproline. Position 1174 is a 3-hydroxyproline (Pro-1174). 4-hydroxyproline occurs at positions 1175, 1178, and 1181. Residues 1182-1207 (SGGYDFSFLPQPPQEKSQDGGRYYRA) form a nonhelical region (C-terminal) region. Lys-1197 is modified (allysine). Basic and acidic residues predominate over residues 1197-1210 (KSQDGGRYYRADDA). Positions 1208 to 1453 (DDANVVRDRD…GLDIGPACFV (246 aa)) are cleaved as a propeptide — C-terminal propeptide. One can recognise a Fibrillar collagen NC1 domain in the interval 1218–1453 (LEVDTTLKSL…GLDIGPACFV (236 aa)). Cystine bridges form between Cys-1248-Cys-1280, Cys-1288-Cys-1451, and Cys-1359-Cys-1404. Residues Asp-1266, Asn-1268, Gln-1269, Cys-1271, and Asp-1274 each contribute to the Ca(2+) site. An N-linked (GlcNAc...) asparagine glycan is attached at Asn-1354.

This sequence belongs to the fibrillar collagen family. In terms of assembly, trimers of one alpha 2(I) and two alpha 1(I) chains. Interacts with MRC2. Interacts with TRAM2. Interacts with MFAP4 in a Ca (2+)-dependent manner. In terms of processing, contains mostly 4-hydroxyproline. Proline residues at the third position of the tripeptide repeating unit (G-X-Y) are hydroxylated in some or all of the chains. Contains 3-hydroxyproline at a few sites. This modification occurs on the first proline residue in the sequence motif Gly-Pro-Hyp, where Hyp is 4-hydroxyproline. Post-translationally, lysine residues at the third position of the tripeptide repeating unit (G-X-Y) are 5-hydroxylated in some or all of the chains. In terms of processing, O-glycosylated on hydroxylated lysine residues. The O-linked glycan consists of a Glc-Gal disaccharide. In terms of tissue distribution, forms the fibrils of tendon, ligaments and bones. In bones the fibrils are mineralized with calcium hydroxyapatite.

The protein resides in the secreted. It localises to the extracellular space. The protein localises to the extracellular matrix. Its function is as follows. Type I collagen is a member of group I collagen (fibrillar forming collagen). This Mus musculus (Mouse) protein is Collagen alpha-1(I) chain.